A 312-amino-acid polypeptide reads, in one-letter code: Taste receptor type 2 member 140 (312 aa).

The Extracellular portion of the chain corresponds to 1–9 (MKVTVECAL). Residues 10–30 (LITLIVEIIIGCLGNGFIAVV) traverse the membrane as a helical segment. Residues 31–46 (NIMDWTKRRRFSLVDQ) lie on the Cytoplasmic side of the membrane. Residues 47–67 (ILTALAISRLAFVWSLLTVLV) traverse the membrane as a helical segment. The Extracellular segment spans residues 68 to 87 (ISELHSSLLITRKMLRIINN). Residues 88-108 (FWTVTNHFSIWLATCLSIFYF) traverse the membrane as a helical segment. Topologically, residues 109-133 (LKIANFSNSIFLSLRWRVKTVVSLT) are cytoplasmic. A helical membrane pass occupies residues 134-154 (LLVSLLLLLVNVIIINTCIVI). The Extracellular portion of the chain corresponds to 155–185 (SVEGYKVNMSYSSHFNNNPQISRIPLFTNTM). N-linked (GlcNAc...) asparagine glycosylation is present at Asn-162. A helical membrane pass occupies residues 186 to 206 (FTFIPFTVTLTIFLLLIFSLW). At 207-229 (RHLKKMQHRAKGPRDPSTTAHIK) the chain is on the cytoplasmic side. Residues 230–250 (ALQMVVTFLFLYTIFFLALVM) form a helical membrane-spanning segment. Residues 251-264 (QAWNNEIQSKTVFN) lie on the Extracellular side of the membrane. The chain crosses the membrane as a helical span at residues 265 to 285 (LVFESIALAFPSGHSCVLILG). The Cytoplasmic portion of the chain corresponds to 286–312 (NSKLRQAFLTIIWWLRSSFNAAELSSP).

Belongs to the G-protein coupled receptor T2R family.

The protein resides in the membrane. Putative taste receptor which may play a role in the perception of bitterness. This chain is Taste receptor type 2 member 140, found in Rattus norvegicus (Rat).